The primary structure comprises 1052 residues: uncharacterized protein (1052 aa).

The 173-residue stretch at 389 to 561 (WINKGKTFAI…NKGGNYIMIN (173 aa)) folds into the Helicase ATP-binding domain. Position 400-407 (400-407 (SAMGTGKT)) interacts with ATP.

This sequence belongs to the mimivirus R1 family.

This is an uncharacterized protein from Acanthamoeba polyphaga mimivirus (APMV).